A 360-amino-acid polypeptide reads, in one-letter code: Protein MGF 360-1L (360 aa).

Belongs to the asfivirus MGF 360 family.

Functionally, plays a role in virus cell tropism, and may be required for efficient virus replication in macrophages. The sequence is that of Protein MGF 360-1L from African swine fever virus (strain Badajoz 1971 Vero-adapted) (Ba71V).